The primary structure comprises 282 residues: MATEHAPTASEYVVHHLTHLNSTGHAQTSIVDFSVINVDSMFYSVLLGLLTVFLLWLAARKATAGVPGRFQGFVELLVEMVADQAKGIIHSAESRKFVAPLALTVFVWIFLMNAMDMLPVDLLPRIWEGVYASAGGDPHHAYMRVVPTADLSATLGMSCGVLLLCLYYNVKIKGVSGWVHELFTAPFGSHPLLYPINFAMQIIEFVAKTVSHGMRLFGNMYAGELIFILIALLGSTATVFGFVGHIVAGSIWAIFHILIITLQAFIFMMLTLVYIGQAHEGH.

Transmembrane regions (helical) follow at residues 38-58 (VDSMFYSVLLGLLTVFLLWLA), 97-117 (FVAPLALTVFVWIFLMNAMDM), 145-165 (VVPTADLSATLGMSCGVLLLC), 187-207 (FGSHPLLYPINFAMQIIEFVA), 225-247 (LIFILIALLGSTATVFGFVGHIV), and 261-281 (TLQAFIFMMLTLVYIGQAHEG).

Belongs to the ATPase A chain family. F-type ATPases have 2 components, CF(1) - the catalytic core - and CF(0) - the membrane proton channel. CF(1) has five subunits: alpha(3), beta(3), gamma(1), delta(1), epsilon(1). CF(0) has three main subunits: a(1), b(2) and c(9-12). The alpha and beta chains form an alternating ring which encloses part of the gamma chain. CF(1) is attached to CF(0) by a central stalk formed by the gamma and epsilon chains, while a peripheral stalk is formed by the delta and b chains.

It localises to the cell inner membrane. In terms of biological role, key component of the proton channel; it plays a direct role in the translocation of protons across the membrane. The polypeptide is ATP synthase subunit a (Azoarcus sp. (strain BH72)).